The primary structure comprises 241 residues: Demethylmenaquinone methyltransferase (241 aa).

S-adenosyl-L-methionine-binding positions include threonine 60, aspartate 81, and 106 to 107 (DA).

This sequence belongs to the class I-like SAM-binding methyltransferase superfamily. MenG/UbiE family.

It carries out the reaction a 2-demethylmenaquinol + S-adenosyl-L-methionine = a menaquinol + S-adenosyl-L-homocysteine + H(+). It functions in the pathway quinol/quinone metabolism; menaquinone biosynthesis; menaquinol from 1,4-dihydroxy-2-naphthoate: step 2/2. Methyltransferase required for the conversion of demethylmenaquinol (DMKH2) to menaquinol (MKH2). The polypeptide is Demethylmenaquinone methyltransferase (Staphylococcus aureus (strain Mu3 / ATCC 700698)).